The sequence spans 268 residues: Hydroxyethylthiazole kinase (268 aa).

Met-45 contacts substrate. ATP is bound by residues Arg-121 and Thr-167. Position 194 (Gly-194) interacts with substrate.

The protein belongs to the Thz kinase family. Requires Mg(2+) as cofactor.

It catalyses the reaction 5-(2-hydroxyethyl)-4-methylthiazole + ATP = 4-methyl-5-(2-phosphooxyethyl)-thiazole + ADP + H(+). It participates in cofactor biosynthesis; thiamine diphosphate biosynthesis; 4-methyl-5-(2-phosphoethyl)-thiazole from 5-(2-hydroxyethyl)-4-methylthiazole: step 1/1. In terms of biological role, catalyzes the phosphorylation of the hydroxyl group of 4-methyl-5-beta-hydroxyethylthiazole (THZ). The chain is Hydroxyethylthiazole kinase from Bacillus anthracis (strain A0248).